The sequence spans 231 residues: 3-oxoadipate CoA-transferase subunit A (231 aa).

25–31 (GGFGTAG) contacts CoA.

This sequence belongs to the 3-oxoacid CoA-transferase subunit A family. Heterodimer.

It catalyses the reaction 3-oxoadipate + succinyl-CoA = 3-oxoadipyl-CoA + succinate. Its pathway is aromatic compound metabolism; beta-ketoadipate pathway; acetyl-CoA and succinyl-CoA from 3-oxoadipate: step 1/2. This Pseudomonas putida (Arthrobacter siderocapsulatus) protein is 3-oxoadipate CoA-transferase subunit A (pcaI).